The primary structure comprises 439 residues: MQVKENKQLCLISLGCSKNLVDSEVMLGKLYNYTLTNDAKSADVILINTCGFIESAKQESIQTILNAAKDKKEGAILIASGCLSERYKDEIKELIPEVDIFTGVGDYDKIDILIAKKQNQFSEQVFLSEHYNARIITGSSVHAYVKISEGCNQKCSFCAIPSFKGKLQSRELDSILKEVENLALKGYKDMTFIAQDSSSFLYDKGQKDGLIQLIKAIDKQQALKSARILYLYPSSTTLELIGAIESSPIFQNYFDMPIQHISDSMLKKMRRNSSQAHHLKLLDAMKQVKESFIRSTIIVGHPEENEGEFEELSAFLDEFRFDRLNIFAFSAEENTHAYSLEKVPKKTINARIKALNKIALKHQNHSFKALLNKPIKALVEHKEGEYFYKARDLRWAPEVDGEILINDSELATPLQPGHYTIVPSVFKDNILLAKVLSPF.

The region spanning 7–119 (KQLCLISLGC…IDILIAKKQN (113 aa)) is the MTTase N-terminal domain. Residues Cys16, Cys50, Cys82, Cys151, Cys155, and Cys158 each contribute to the [4Fe-4S] cluster site. A Radical SAM core domain is found at 137 to 368 (TGSSVHAYVK…ALKHQNHSFK (232 aa)).

Belongs to the methylthiotransferase family. RimO subfamily. [4Fe-4S] cluster is required as a cofactor.

The protein resides in the cytoplasm. The catalysed reaction is L-aspartate(89)-[ribosomal protein uS12]-hydrogen + (sulfur carrier)-SH + AH2 + 2 S-adenosyl-L-methionine = 3-methylsulfanyl-L-aspartate(89)-[ribosomal protein uS12]-hydrogen + (sulfur carrier)-H + 5'-deoxyadenosine + L-methionine + A + S-adenosyl-L-homocysteine + 2 H(+). In terms of biological role, catalyzes the methylthiolation of an aspartic acid residue of ribosomal protein uS12. The polypeptide is Ribosomal protein uS12 methylthiotransferase RimO (Helicobacter pylori (strain HPAG1)).